A 370-amino-acid polypeptide reads, in one-letter code: Propane 2-monooxygenase, reductase component (370 aa).

A compositionally biased stretch (basic residues) spans 1–14 (MAPRPLRRHPPLHH). Residues 1-21 (MAPRPLRRHPPLHHSFHESRR) form a disordered region. Residues 28-118 (HRINFEPVDI…DCTIELLNFD (91 aa)) enclose the 2Fe-2S ferredoxin-type domain. [2Fe-2S] cluster-binding residues include cysteine 62, cysteine 67, cysteine 70, and cysteine 102. Positions 128–229 (IQDVRTRVTR…TGPYGSFTIK (102 aa)) constitute an FAD-binding FR-type domain.

Belongs to the TmoA/XamoA family. In terms of assembly, the propane 2-monooxygenase multicomponent enzyme system is composed of an electron transfer component and a monooxygenase component interacting with the effector protein PrmD. The electron transfer component is composed of a reductase (PrmB), and the monooxygenase component is formed by a large subunit (PrmA) and a small subunit (PrmC). The cofactor is FAD. [2Fe-2S] cluster serves as cofactor.

Functionally, reductase component of the propane 2-monooxygenase multicomponent enzyme system which is involved in the degradation of propane via the O2-dependent hydroxylation of propane. Reductase catalyzes the transfer of electrons from NADH or NADPH to monooxygenase. The chain is Propane 2-monooxygenase, reductase component from Rhodococcus jostii (strain RHA1).